Consider the following 337-residue polypeptide: tRNA N6-adenosine threonylcarbamoyltransferase (337 aa).

Fe cation is bound by residues H110 and H114. Substrate-binding positions include 133 to 137 (MVSGG), D166, G179, D183, and N276. Residue D302 participates in Fe cation binding.

This sequence belongs to the KAE1 / TsaD family. It depends on Fe(2+) as a cofactor.

Its subcellular location is the cytoplasm. It catalyses the reaction L-threonylcarbamoyladenylate + adenosine(37) in tRNA = N(6)-L-threonylcarbamoyladenosine(37) in tRNA + AMP + H(+). In terms of biological role, required for the formation of a threonylcarbamoyl group on adenosine at position 37 (t(6)A37) in tRNAs that read codons beginning with adenine. Is involved in the transfer of the threonylcarbamoyl moiety of threonylcarbamoyl-AMP (TC-AMP) to the N6 group of A37, together with TsaE and TsaB. TsaD likely plays a direct catalytic role in this reaction. The chain is tRNA N6-adenosine threonylcarbamoyltransferase from Fervidobacterium nodosum (strain ATCC 35602 / DSM 5306 / Rt17-B1).